A 100-amino-acid polypeptide reads, in one-letter code: Movement protein TGBp3 (100 aa).

Residues Met-1–Asp-41 are Lumenal-facing. Residues Leu-42 to Pro-59 traverse the membrane as a helical segment. Topologically, residues Lys-60–Leu-100 are cytoplasmic.

Belongs to the Tymovirales TGBp3 protein family.

It localises to the host endoplasmic reticulum membrane. Plays a role in viral cell-to-cell propagation, by facilitating genome transport to neighboring plant cells through plasmosdesmata. May induce the formation of granular vesicles derived from the Endoplasmic reticulum, which align on actin filaments. This Narcissus mosaic virus (NMV) protein is Movement protein TGBp3.